A 262-amino-acid chain; its full sequence is Phosphonates import ATP-binding protein PhnC (262 aa).

In terms of domain architecture, ABC transporter spans 5-253 (IRVEKLAKTF…RFDHLYRSIN (249 aa)). Position 37–44 (37–44 (GPSGSGKS)) interacts with ATP.

It belongs to the ABC transporter superfamily. Phosphonates importer (TC 3.A.1.9.1) family. In terms of assembly, the complex is composed of two ATP-binding proteins (PhnC), two transmembrane proteins (PhnE) and a solute-binding protein (PhnD).

The protein localises to the cell inner membrane. The enzyme catalyses phosphonate(out) + ATP + H2O = phosphonate(in) + ADP + phosphate + H(+). Its function is as follows. Part of the ABC transporter complex PhnCDE involved in phosphonates import. Responsible for energy coupling to the transport system. The sequence is that of Phosphonates import ATP-binding protein PhnC from Escherichia coli O6:H1 (strain CFT073 / ATCC 700928 / UPEC).